The chain runs to 140 residues: Methylglyoxal synthase (140 aa).

One can recognise an MGS-like domain in the interval 1-140; that stretch reads MRSKPRIALI…DQAAADDAAP (140 aa). Residues His12, Lys16, 38–41, and 58–59 contribute to the substrate site; these read TGTT and SG. Catalysis depends on Asp64, which acts as the Proton donor/acceptor. His91 serves as a coordination point for substrate.

The protein belongs to the methylglyoxal synthase family.

The enzyme catalyses dihydroxyacetone phosphate = methylglyoxal + phosphate. Functionally, catalyzes the formation of methylglyoxal from dihydroxyacetone phosphate. The chain is Methylglyoxal synthase from Cupriavidus metallidurans (strain ATCC 43123 / DSM 2839 / NBRC 102507 / CH34) (Ralstonia metallidurans).